Here is an 88-residue protein sequence, read N- to C-terminus: Putative membrane protein insertion efficiency factor (88 aa).

The tract at residues 68 to 88 (VPPPNSDTRARGEADARSHRL) is disordered. Positions 75-88 (TRARGEADARSHRL) are enriched in basic and acidic residues.

Belongs to the UPF0161 family.

The protein localises to the cell inner membrane. Could be involved in insertion of integral membrane proteins into the membrane. This chain is Putative membrane protein insertion efficiency factor, found in Burkholderia cenocepacia (strain ATCC BAA-245 / DSM 16553 / LMG 16656 / NCTC 13227 / J2315 / CF5610) (Burkholderia cepacia (strain J2315)).